The chain runs to 376 residues: 1-deoxy-D-xylulose 5-phosphate reductoisomerase (376 aa).

NADPH contacts are provided by T12, G13, S14, I15, R39, Q40, and N110. K111 is a 1-deoxy-D-xylulose 5-phosphate binding site. E112 is an NADPH binding site. D136 provides a ligand contact to Mn(2+). Residues S137, E138, S162, and H185 each coordinate 1-deoxy-D-xylulose 5-phosphate. Mn(2+) is bound at residue E138. G191 provides a ligand contact to NADPH. Residues S198, N203, K204, and E207 each contribute to the 1-deoxy-D-xylulose 5-phosphate site. E207 provides a ligand contact to Mn(2+).

It belongs to the DXR family. Mg(2+) is required as a cofactor. Requires Mn(2+) as cofactor.

It catalyses the reaction 2-C-methyl-D-erythritol 4-phosphate + NADP(+) = 1-deoxy-D-xylulose 5-phosphate + NADPH + H(+). Its pathway is isoprenoid biosynthesis; isopentenyl diphosphate biosynthesis via DXP pathway; isopentenyl diphosphate from 1-deoxy-D-xylulose 5-phosphate: step 1/6. In terms of biological role, catalyzes the NADPH-dependent rearrangement and reduction of 1-deoxy-D-xylulose-5-phosphate (DXP) to 2-C-methyl-D-erythritol 4-phosphate (MEP). This chain is 1-deoxy-D-xylulose 5-phosphate reductoisomerase, found in Treponema pallidum (strain Nichols).